The chain runs to 417 residues: UDP-N-acetylglucosamine 1-carboxyvinyltransferase (417 aa).

A phosphoenolpyruvate-binding site is contributed by 22–23 (KN). A UDP-N-acetyl-alpha-D-glucosamine-binding site is contributed by Arg93. Residue Cys117 is the Proton donor of the active site. Cys117 bears the 2-(S-cysteinyl)pyruvic acid O-phosphothioketal mark. UDP-N-acetyl-alpha-D-glucosamine contacts are provided by residues 122-126 (RPVDQ), Asp305, and Ile327.

This sequence belongs to the EPSP synthase family. MurA subfamily.

It is found in the cytoplasm. The enzyme catalyses phosphoenolpyruvate + UDP-N-acetyl-alpha-D-glucosamine = UDP-N-acetyl-3-O-(1-carboxyvinyl)-alpha-D-glucosamine + phosphate. It functions in the pathway cell wall biogenesis; peptidoglycan biosynthesis. Cell wall formation. Adds enolpyruvyl to UDP-N-acetylglucosamine. This chain is UDP-N-acetylglucosamine 1-carboxyvinyltransferase, found in Nitrosomonas eutropha (strain DSM 101675 / C91 / Nm57).